The following is a 436-amino-acid chain: GTPase Der (436 aa).

EngA-type G domains follow at residues 4–167 (PIVA…PDEA) and 175–351 (IRFS…DNHR). Residues 10 to 17 (GRPNVGKS), 57 to 61 (DTGGI), 119 to 122 (NKVD), 181 to 188 (GRPNVGKS), 229 to 233 (DTAGM), and 294 to 297 (NKWD) contribute to the GTP site. The KH-like domain maps to 352 to 436 (KRITSSTLND…PIKLIVRARK (85 aa)).

It belongs to the TRAFAC class TrmE-Era-EngA-EngB-Septin-like GTPase superfamily. EngA (Der) GTPase family. Associates with the 50S ribosomal subunit.

Functionally, GTPase that plays an essential role in the late steps of ribosome biogenesis. The polypeptide is GTPase Der (Leuconostoc mesenteroides subsp. mesenteroides (strain ATCC 8293 / DSM 20343 / BCRC 11652 / CCM 1803 / JCM 6124 / NCDO 523 / NBRC 100496 / NCIMB 8023 / NCTC 12954 / NRRL B-1118 / 37Y)).